The primary structure comprises 102 residues: Protamine-2 (102 aa).

3 positions are modified to phosphoserine: Ser-8, Ser-10, and Ser-37. Disordered regions lie at residues 15–41 (EVYG…PEQV) and 66–102 (IHRQ…CRRH).

Belongs to the protamine P2 family. In terms of assembly, interacts with TDRP. Post-translationally, proteolytic processing into mature chains is required for histone eviction during spermatogenesis. Transition proteins (TNP1 and TNP2) are required for processing. Testis.

The protein resides in the nucleus. It localises to the chromosome. In terms of biological role, protamines substitute for histones in the chromatin of sperm during the haploid phase of spermatogenesis. They compact sperm DNA into a highly condensed, stable and inactive complex. The chain is Protamine-2 (PRM2) from Pongo pygmaeus (Bornean orangutan).